A 373-amino-acid chain; its full sequence is Alanine racemase (373 aa).

Lysine 40 (proton acceptor; specific for D-alanine) is an active-site residue. Lysine 40 carries the post-translational modification N6-(pyridoxal phosphate)lysine. Arginine 140 lines the substrate pocket. The Proton acceptor; specific for L-alanine role is filled by tyrosine 268. Residue methionine 315 participates in substrate binding.

Belongs to the alanine racemase family. Pyridoxal 5'-phosphate is required as a cofactor.

The catalysed reaction is L-alanine = D-alanine. Its pathway is amino-acid biosynthesis; D-alanine biosynthesis; D-alanine from L-alanine: step 1/1. Catalyzes the interconversion of L-alanine and D-alanine. May also act on other amino acids. The polypeptide is Alanine racemase (alr) (Limosilactobacillus fermentum (strain NBRC 3956 / LMG 18251) (Lactobacillus fermentum)).